Reading from the N-terminus, the 158-residue chain is Large ribosomal subunit protein uL30 (158 aa).

The protein belongs to the universal ribosomal protein uL30 family. In terms of assembly, part of the 50S ribosomal subunit.

The sequence is that of Large ribosomal subunit protein uL30 from Sulfurisphaera tokodaii (strain DSM 16993 / JCM 10545 / NBRC 100140 / 7) (Sulfolobus tokodaii).